Here is a 122-residue protein sequence, read N- to C-terminus: MRFSIISASLVLIFANVKAFNEEEILEIFCGVPKKLVSRYNQCLIDHGPEIIKKNYEIINSCMKGHLGSETESAMEYVCNKKNVDISIKRCISDKISEEMKEFDRRARLEVWDVLYVCIFKA.

Positions Met-1–Ala-19 are cleaved as a signal peptide.

Post-translationally, contains 3 disulfide bonds. Expressed by the venom gland.

It is found in the secreted. The chain is Venom protein 7.1 from Lychas mucronatus (Chinese swimming scorpion).